We begin with the raw amino-acid sequence, 620 residues long: Translation initiation factor IF-2 (620 aa).

The tr-type G domain maps to 119 to 288 (ERPPIVTIMG…IILISELENL (170 aa)). The segment at 128–135 (GHVDHGKT) is G1. A GTP-binding site is contributed by 128–135 (GHVDHGKT). Positions 153-157 (GITQA) are G2. The segment at 175 to 178 (DTPG) is G3. Residues 175–179 (DTPGH) and 229–232 (NKID) contribute to the GTP site. The segment at 229–232 (NKID) is G4. The G5 stretch occupies residues 265–267 (SAI).

The protein belongs to the TRAFAC class translation factor GTPase superfamily. Classic translation factor GTPase family. IF-2 subfamily.

It localises to the cytoplasm. Functionally, one of the essential components for the initiation of protein synthesis. Protects formylmethionyl-tRNA from spontaneous hydrolysis and promotes its binding to the 30S ribosomal subunits. Also involved in the hydrolysis of GTP during the formation of the 70S ribosomal complex. The protein is Translation initiation factor IF-2 of Mycoplasma mycoides subsp. mycoides SC (strain CCUG 32753 / NCTC 10114 / PG1).